The following is a 73-amino-acid chain: Translation initiation factor IF-1 (73 aa).

The S1-like domain occupies 1 to 72 (MSKDDLIQFT…TKGRVILRHQ (72 aa)).

The protein belongs to the IF-1 family. As to quaternary structure, component of the 30S ribosomal translation pre-initiation complex which assembles on the 30S ribosome in the order IF-2 and IF-3, IF-1 and N-formylmethionyl-tRNA(fMet); mRNA recruitment can occur at any time during PIC assembly.

It is found in the cytoplasm. Functionally, one of the essential components for the initiation of protein synthesis. Stabilizes the binding of IF-2 and IF-3 on the 30S subunit to which N-formylmethionyl-tRNA(fMet) subsequently binds. Helps modulate mRNA selection, yielding the 30S pre-initiation complex (PIC). Upon addition of the 50S ribosomal subunit IF-1, IF-2 and IF-3 are released leaving the mature 70S translation initiation complex. The chain is Translation initiation factor IF-1 from Rickettsia bellii (strain OSU 85-389).